Consider the following 1392-residue polypeptide: FERM and PDZ domain-containing protein 2 (1392 aa).

One can recognise a KIND domain in the interval Val15–Glu197. The tract at residues Ser211–Glu246 is disordered. Residues Cys342–His642 enclose the FERM domain. The PDZ 1 domain occupies Gly775–Pro861. Positions Gly903–Pro930 are disordered. Residues His908–Arg917 are compositionally biased toward basic and acidic residues. The interaction with GRIN2A and GRIN2B stretch occupies residues Thr937–Gly1027. PDZ domains follow at residues Gly950–Pro1035 and Arg1079–Glu1167. The tract at residues Cys1186 to Pro1236 is disordered. The span at Ser1220–Pro1236 shows a compositional bias: basic and acidic residues.

As to quaternary structure, interacts (via the second PDZ domain) with CTNND2 (via the extreme C-terminus). Interacts (via the second PDZ domain) with PKP4 (via the extreme C-terminus); the interaction directs FRMPD2 to the basolateral membranes. Interacts (via the second PDZ domain) with ARVCF (via the extreme C-terminus). Interacts (via the second PDZ domain) with NMDAR subunits GRIN2A/GLUN2A and GRIN2B/GLUN2B (via the extreme C-terminus); the interaction is direct and is likely to promote NMDAR-mediated neural signal transmission. Binds GRIN2A with lower affinity than GRIN2B. Interacts (via the third PDZ domain) with LRIT1 (via the extreme C-terminus); the interaction leads to their colocalization in photoreceptor synapses. Interacts with NOD2; the interaction is likely to trigger NOD2-mediated nuclear factor kappaB activation.

The protein localises to the cytoplasm. It localises to the postsynaptic density. The protein resides in the basolateral cell membrane. Its subcellular location is the cell junction. It is found in the tight junction. Its function is as follows. Functions as a scaffold protein and likely plays a role in N-methyl-D-aspartic acid receptor (NMDAR)-mediated synaptic excitatory transmission. May be involved in synapse formation in cone photoreceptor cells. May play a role in the regulation of tight junction formation. Binds phosphatidylinositol 3,4-bisphosphate (PtdIns(3,4)P2). May pNF-kappa-Blay a role in the regulation of NOD2-mediated NF-kappa-B activation in immune response. In Mus musculus (Mouse), this protein is FERM and PDZ domain-containing protein 2.